A 1036-amino-acid chain; its full sequence is Presequence protease, mitochondrial (1036 aa).

The transit peptide at 1 to 15 (MWRFSGRRGLCAVQR) directs the protein to the mitochondrion. Histidine 104 provides a ligand contact to Zn(2+). The Proton acceptor role is filled by glutamate 107. 2 residues coordinate Zn(2+): histidine 108 and glutamate 205. Cysteines 119 and 556 form a disulfide. Lysine 759 carries the post-translational modification N6-acetyllysine. Lysine 770 is modified (N6-acetyllysine; alternate). Position 770 is an N6-succinyllysine; alternate (lysine 770). The tract at residues 806–833 (SKKERKPVRPHIVEKPTPSGPSGAAHVS) is disordered. Lysine 848 is subject to N6-succinyllysine. The residue at position 883 (lysine 883) is an N6-acetyllysine. N6-succinyllysine is present on lysine 945.

Belongs to the peptidase M16 family. PreP subfamily. As to quaternary structure, monomer and homodimer; homodimerization is induced by binding of the substrate. Zn(2+) is required as a cofactor. A disulfide bond locks the enzyme in the closed conformation preventing substrate entry into the catalytic chamber.

Its subcellular location is the mitochondrion matrix. Mainly exists in a closed and catalytically competent conformation but a closed-to-open switch allows substrate entry into the catalytic chamber. Substrate binding induces closure and dimerization. A disulfide bond may lock the enzyme in a closed conformation preventing substrate entry into the catalytic chamber, participating in redox regulation of the enzyme. Inhibited by metal-chelating agents. Inhibited by nickel and zinc excess, and slightly activated by manganese. In terms of biological role, metalloendopeptidase of the mitochondrial matrix that functions in peptide cleavage and degradation rather than in protein processing. Has an ATP-independent activity. Specifically cleaves peptides in the range of 5 to 65 residues. Shows a preference for cleavage after small polar residues and before basic residues, but without any positional preference. Degrades the transit peptides of mitochondrial proteins after their cleavage. Also degrades other unstructured peptides. It is also able to degrade amyloid-beta protein 40, one of the peptides produced by APP processing, when it accumulates in mitochondrion. It is a highly efficient protease, at least toward amyloid-beta protein 40. Cleaves that peptide at a specific position and is probably not processive, releasing digested peptides intermediates that can be further cleaved subsequently. It is also able to degrade amyloid-beta protein 42. In Mus musculus (Mouse), this protein is Presequence protease, mitochondrial.